The chain runs to 198 residues: Large ribosomal subunit protein uL13B (198 aa).

An N-acetylserine; partial modification is found at S2. S43 bears the Phosphoserine mark. Residue K176 forms a Glycyl lysine isopeptide (Lys-Gly) (interchain with G-Cter in ubiquitin) linkage. S181, S185, and S187 each carry phosphoserine.

Belongs to the universal ribosomal protein uL13 family. As to quaternary structure, component of the large ribosomal subunit (LSU). Mature yeast ribosomes consist of a small (40S) and a large (60S) subunit. The 40S small subunit contains 1 molecule of ribosomal RNA (18S rRNA) and 33 different proteins (encoded by 57 genes). The large 60S subunit contains 3 rRNA molecules (25S, 5.8S and 5S rRNA) and 46 different proteins (encoded by 81 genes). N-terminally acetylated by acetyltransferase NatA.

It is found in the cytoplasm. Its function is as follows. Component of the ribosome, a large ribonucleoprotein complex responsible for the synthesis of proteins in the cell. The small ribosomal subunit (SSU) binds messenger RNAs (mRNAs) and translates the encoded message by selecting cognate aminoacyl-transfer RNA (tRNA) molecules. The large subunit (LSU) contains the ribosomal catalytic site termed the peptidyl transferase center (PTC), which catalyzes the formation of peptide bonds, thereby polymerizing the amino acids delivered by tRNAs into a polypeptide chain. The nascent polypeptides leave the ribosome through a tunnel in the LSU and interact with protein factors that function in enzymatic processing, targeting, and the membrane insertion of nascent chains at the exit of the ribosomal tunnel. The chain is Large ribosomal subunit protein uL13B from Saccharomyces cerevisiae (strain ATCC 204508 / S288c) (Baker's yeast).